Reading from the N-terminus, the 3096-residue chain is Unconventional myosin-XVB (3096 aa).

Disordered stretches follow at residues 1–330, 389–489, 508–540, and 553–649; these read MGRN…GPED, RPPE…GWGR, GGMP…ETPD, and AGRA…GPRL. Low complexity predominate over residues 19 to 33; the sequence is ASGEQESGSASADGA. Positions 34 to 50 are enriched in basic and acidic residues; the sequence is PSRERRSDRGQADRAKP. Positions 124–143 are enriched in basic residues; the sequence is RRRRKRKDKGPSARRGRRTP. Composition is skewed to basic and acidic residues over residues 212–222 and 261–288; these read DWPHADTRGRE and TFED…RGAE. The span at 307–330 shows a compositional bias: low complexity; that stretch reads AVGQVPAAAGEGEAGAAAGAGPED. A compositionally biased stretch (basic and acidic residues) spans 406–416; that stretch reads WGRRKPDEGRG. Residues 417–426 are compositionally biased toward basic residues; sequence HGRGSKGRGR. Positions 427–489 are enriched in basic and acidic residues; it reads GKADEGRGHE…HQRGYEGWGR (63 aa). Residues 720-1394 form the Myosin motor domain; it reads EDMEDLARLR…GWQRLEELRD (675 aa). Residue 818–825 coordinates ATP; it reads GHSGSGKT. The tract at residues 1273–1295 is actin-binding; the sequence is LEDLIARLGRSHVYFIQCLTPNP. Residues 1414 to 1443 form the IQ domain; the sequence is RQRVLPRMQARMRGFQARKRYLRRRAALGQ. A MyTH4 1 domain is found at 1551–1702; sequence RPGQPLAKPL…PTQLEWLAGW (152 aa). Disordered stretches follow at residues 1802 to 1833, 1963 to 2026, and 2040 to 2262; these read PGIQ…VQRS, MQQR…PKSF, and QITV…LPED. Pro residues predominate over residues 1808–1820; that stretch reads SLPPGPPPGPAPT. The span at 1963–1980 shows a compositional bias: low complexity; that stretch reads MQQRQQQARASEAASQAS. Residues 2059–2076 show a composition bias toward acidic residues; that stretch reads AQEEEEEEEEEEEQEEQE. Residues 2102 to 2116 show a composition bias toward basic and acidic residues; it reads APKEAEAEPAKETAA. Over residues 2159–2170 the composition is skewed to pro residues; that stretch reads GPVPVPVQPSRP. The span at 2176–2185 shows a compositional bias: basic and acidic residues; it reads RKIDPKDEAL. Composition is skewed to pro residues over residues 2199 to 2217 and 2247 to 2261; these read MLSP…PRPK and HTPP…PLPE. The 62-residue stretch at 2481 to 2542 folds into the SH3 domain; that stretch reads KDSGYVIALR…PADIVQPAAA (62 aa). The interval 2548 to 2567 is disordered; that stretch reads SKEQRSGWHKGQLSNGEPGL. One can recognise a MyTH4 2 domain in the interval 2643-2789; that stretch reads YTKAPIQESL…PPPGEMKAFL (147 aa). Positions 2795–3096 constitute an FERM domain; the sequence is RLLLIHLPGG…ASCTEWPSIN (302 aa).

Belongs to the TRAFAC class myosin-kinesin ATPase superfamily. Myosin family. As to expression, detected in brain, stomach and kidney.

Its subcellular location is the cytoplasm. The polypeptide is Unconventional myosin-XVB (Homo sapiens (Human)).